The chain runs to 164 residues: UPF0304 protein YfbU (164 aa).

The protein belongs to the UPF0304 family.

The sequence is that of UPF0304 protein YfbU from Salmonella choleraesuis (strain SC-B67).